A 304-amino-acid chain; its full sequence is MTYWNQRTVAKRVSCTGVGLHSGKPATLTLAPAPADSGITFVRMDLDVEVPARNDLVVDTMLSTSVALGAARVSTVEHVLAALAGMGIDNCRVEVDGPEIPIVDGSAAPFVCLIQEAGTRQQRAGRRYLVVDQPVEIRDGDKLARLDPADGFVVDFTADFDHPLVTNQSFRVALSDRAFEREVARARTFCFRRDIERMQAAGLAKGGSLDNAIVIDEFSILNPEGLRFPDEFARHKVLDAIGDLALLGMPVLGALTAVKSGHALNQALVRKVLADPGCHRVVRLTSDADVPARRPVALGLPEAI.

Zn(2+)-binding residues include His-78, His-235, and Asp-239. The active-site Proton donor is His-262.

It belongs to the LpxC family. Zn(2+) is required as a cofactor.

It carries out the reaction a UDP-3-O-[(3R)-3-hydroxyacyl]-N-acetyl-alpha-D-glucosamine + H2O = a UDP-3-O-[(3R)-3-hydroxyacyl]-alpha-D-glucosamine + acetate. The protein operates within glycolipid biosynthesis; lipid IV(A) biosynthesis; lipid IV(A) from (3R)-3-hydroxytetradecanoyl-[acyl-carrier-protein] and UDP-N-acetyl-alpha-D-glucosamine: step 2/6. Its function is as follows. Catalyzes the hydrolysis of UDP-3-O-myristoyl-N-acetylglucosamine to form UDP-3-O-myristoylglucosamine and acetate, the committed step in lipid A biosynthesis. The polypeptide is UDP-3-O-acyl-N-acetylglucosamine deacetylase (Anaeromyxobacter sp. (strain Fw109-5)).